Consider the following 293-residue polypeptide: Acetylglutamate kinase (293 aa).

Substrate-binding positions include 70–71, Arg-92, and Asn-186; that span reads GG.

The protein belongs to the acetylglutamate kinase family. ArgB subfamily.

It localises to the cytoplasm. The catalysed reaction is N-acetyl-L-glutamate + ATP = N-acetyl-L-glutamyl 5-phosphate + ADP. It functions in the pathway amino-acid biosynthesis; L-arginine biosynthesis; N(2)-acetyl-L-ornithine from L-glutamate: step 2/4. In terms of biological role, catalyzes the ATP-dependent phosphorylation of N-acetyl-L-glutamate. In Synechococcus sp. (strain CC9605), this protein is Acetylglutamate kinase.